A 938-amino-acid polypeptide reads, in one-letter code: Kinesin-like protein KIN-7B (938 aa).

Residues 29 to 348 form the Kinesin motor domain; sequence KILVTVRMRP…LSFAMSAKEV (320 aa). ATP is bound at residue 113 to 120; that stretch reads GQTSSGKT. Residues 357–431 are a coiled coil; sequence VVSEKKLLKH…DLERKAKERK (75 aa). A disordered region spans residues 450 to 481; that stretch reads TKEESIPSKSVPSSRRTARDRRKDNVRQSLTS. The stretch at 555 to 590 forms a coiled coil; that stretch reads KANLKEEINRLNSQEIAALEKKLECVQNTIDMLVSS. Residues 628 to 678 are disordered; the sequence is CSPLSGTENKDPESNVVSANSAPVSFGATPPKRDDNRCRTQSREGTPVSRQ. Low complexity predominate over residues 641–652; that stretch reads SNVVSANSAPVS. A compositionally biased stretch (basic and acidic residues) spans 658–669; sequence PKRDDNRCRTQS.

Belongs to the TRAFAC class myosin-kinesin ATPase superfamily. Kinesin family. KIN-7 subfamily. As to quaternary structure, interacts with ANP3. Interacts with TIO/FU. Expressed in roots, stems, flowers, pollen mother cells and embryos.

The protein localises to the cytoplasm. It is found in the cytoskeleton. The protein resides in the phragmoplast. In terms of biological role, probable plus end-directed motor protein that functions in the NACK-PQR (ANP3-MKK6-MPK4) MAP kinase signaling pathway, which is essential for somatic cell cytokinesis, especially for the cell-plate formation and its expansion. May regulate the activity and the localization of ANP3, probably by association through the non-catalytic region of the kinase. Functionally redundant with NACK1 and essential to promote the progression of cytokinesis and for cellularization (formation of the cell plate) during microgametogenesis and megagametogenesis. The chain is Kinesin-like protein KIN-7B from Arabidopsis thaliana (Mouse-ear cress).